Consider the following 438-residue polypeptide: Probable phosphoglucosamine mutase (438 aa).

The active-site Phosphoserine intermediate is the Ser91. The Mg(2+) site is built by Ser91, Asp228, Asp230, and Asp232. Phosphoserine is present on Ser91.

It belongs to the phosphohexose mutase family. Requires Mg(2+) as cofactor. Post-translationally, activated by phosphorylation.

The enzyme catalyses alpha-D-glucosamine 1-phosphate = D-glucosamine 6-phosphate. Functionally, catalyzes the conversion of glucosamine-6-phosphate to glucosamine-1-phosphate. The sequence is that of Probable phosphoglucosamine mutase from Methanocella arvoryzae (strain DSM 22066 / NBRC 105507 / MRE50).